Consider the following 361-residue polypeptide: Very-long-chain 3-oxoacyl-CoA reductase (361 aa).

A helical transmembrane segment spans residues 32–52 (PALILSTVGAAFLLRYTLSIF). Positions 79, 133, 163, 198, 236, 240, 269, and 271 each coordinate NADP(+). Tyr236 (proton donor) is an active-site residue. The active-site Lowers pKa of active site Tyr is the Lys240.

The protein belongs to the short-chain dehydrogenases/reductases (SDR) family.

It localises to the endoplasmic reticulum membrane. It carries out the reaction a very-long-chain (3R)-3-hydroxyacyl-CoA + NADP(+) = a very-long-chain 3-oxoacyl-CoA + NADPH + H(+). It participates in lipid metabolism; fatty acid biosynthesis. Functionally, component of the microsomal membrane bound fatty acid elongation system, which produces the 26-carbon very long-chain fatty acids (VLCFA) from palmitate. Catalyzes the reduction of the 3-ketoacyl-CoA intermediate that is formed in each cycle of fatty acid elongation. VLCFAs serve as precursors for ceramide and sphingolipids. The chain is Very-long-chain 3-oxoacyl-CoA reductase from Cryptococcus neoformans var. neoformans serotype D (strain B-3501A) (Filobasidiella neoformans).